A 183-amino-acid polypeptide reads, in one-letter code: MKQKPEDWLNDVPDNQEDDEDDEIIWVSKSEIKRDAEALKDLGAELVDLGKNALEKIPLDDDLRAAVELAQRITREGRRRQLQLIGKLLRARDPEPIQIALDKLNNRHNQQVALFHKLEQLRDRLITEGDDVIPEILALYSHADRQQLRSLVRNAQKEKAANKPPKAARQIFQYLRELAETTN.

Residues Met1–Asp21 are disordered.

Belongs to the DarP family.

The protein resides in the cytoplasm. Functionally, member of a network of 50S ribosomal subunit biogenesis factors which assembles along the 30S-50S interface, preventing incorrect 23S rRNA structures from forming. Promotes peptidyl transferase center (PTC) maturation. The sequence is that of Dual-action ribosomal maturation protein DarP from Pectobacterium atrosepticum (strain SCRI 1043 / ATCC BAA-672) (Erwinia carotovora subsp. atroseptica).